Consider the following 334-residue polypeptide: Antho-RFamide neuropeptides (334 aa).

The N-terminal stretch at 1–26 is a signal peptide; sequence MLVAMTTASYVTILVTLLFHILTINA. A propeptide spanning residues 27–116 is cleaved from the precursor; the sequence is KTVTKRAKET…REFQGRFGRE (90 aa). Composition is skewed to basic and acidic residues over residues 115 to 289 and 303 to 334; these read REQG…RELL and PQTR…ANKS. The disordered stretch occupies residues 115 to 334; that stretch reads REQGRFGREE…ESNDEEANKS (220 aa). Phe120 is modified (phenylalanine amide). Residues 122 to 125 constitute a propeptide that is removed on maturation; it reads REED. Phe129 carries the phenylalanine amide modification. A propeptide spanning residues 131–134 is cleaved from the precursor; sequence REED. Phe138 is subject to Phenylalanine amide. A propeptide spanning residues 140-142 is cleaved from the precursor; the sequence is REE. A Phenylalanine amide modification is found at Phe146. Residues 148–151 constitute a propeptide that is removed on maturation; that stretch reads REED. Position 155 is a phenylalanine amide (Phe155). Positions 157–160 are excised as a propeptide; that stretch reads REED. At Phe164 the chain carries Phenylalanine amide. The propeptide occupies 166–169; that stretch reads REED. The residue at position 173 (Phe173) is a Phenylalanine amide. The propeptide occupies 175–178; that stretch reads REEE. Position 182 is a phenylalanine amide (Phe182). Residues 184–187 constitute a propeptide that is removed on maturation; it reads REED. Phe191 is modified (phenylalanine amide). A propeptide spanning residues 193–196 is cleaved from the precursor; the sequence is REEE. Residue Phe200 is modified to Phenylalanine amide. Residues 202–205 constitute a propeptide that is removed on maturation; that stretch reads REED. Position 209 is a phenylalanine amide (Phe209). A propeptide spanning residues 211 to 214 is cleaved from the precursor; that stretch reads REED. Phenylalanine amide is present on Phe218. The propeptide occupies 220–223; sequence REEE. Residue Phe227 is modified to Phenylalanine amide. A propeptide spanning residues 229–233 is cleaved from the precursor; it reads KRDED. Phe237 is subject to Phenylalanine amide. Residues 239-242 constitute a propeptide that is removed on maturation; it reads KRED. A Phenylalanine amide modification is found at Phe246. Positions 248–252 are excised as a propeptide; sequence KRDED. Phe256 carries the post-translational modification Phenylalanine amide. Residues 258-262 constitute a propeptide that is removed on maturation; it reads KRDED. At Phe266 the chain carries Phenylalanine amide. Positions 268–271 are excised as a propeptide; it reads KRED. Phe275 is modified (phenylalanine amide). Residues 277–280 constitute a propeptide that is removed on maturation; the sequence is KRED. Residue Phe284 is modified to Phenylalanine amide. A propeptide spanning residues 286–334 is cleaved from the precursor; that stretch reads RELLAKLNKRTTSIQEDPQTRFRDVQMTRRNVAKKDKIEESNDEEANKS.

The protein belongs to the FARP (FMRFamide related peptide) family. In terms of tissue distribution, neurons associated with smooth muscle fibers.

The protein localises to the secreted. Functionally, not known but it could act as a transmitter at neuromuscular synapses. In Calliactis parasitica (Sea anemone), this protein is Antho-RFamide neuropeptides.